A 131-amino-acid polypeptide reads, in one-letter code: Small ribosomal subunit protein uS8 (131 aa).

The protein belongs to the universal ribosomal protein uS8 family. As to quaternary structure, part of the 30S ribosomal subunit. Contacts proteins S5 and S12.

One of the primary rRNA binding proteins, it binds directly to 16S rRNA central domain where it helps coordinate assembly of the platform of the 30S subunit. This chain is Small ribosomal subunit protein uS8, found in Blochmanniella pennsylvanica (strain BPEN).